A 164-amino-acid polypeptide reads, in one-letter code: UPF0303 protein RHE_CH02903 (164 aa).

The protein belongs to the UPF0303 family.

This is UPF0303 protein RHE_CH02903 from Rhizobium etli (strain ATCC 51251 / DSM 11541 / JCM 21823 / NBRC 15573 / CFN 42).